A 360-amino-acid polypeptide reads, in one-letter code: Peptide chain release factor 1 (360 aa).

At Q235 the chain carries N5-methylglutamine. Positions 285 to 313 (KRQQAEASTRRNLLGSGDRSDRNRTYNFP) are disordered.

The protein belongs to the prokaryotic/mitochondrial release factor family. In terms of processing, methylated by PrmC. Methylation increases the termination efficiency of RF1.

The protein resides in the cytoplasm. In terms of biological role, peptide chain release factor 1 directs the termination of translation in response to the peptide chain termination codons UAG and UAA. In Shigella boydii serotype 18 (strain CDC 3083-94 / BS512), this protein is Peptide chain release factor 1.